We begin with the raw amino-acid sequence, 838 residues long: Protein translocase subunit SecA (838 aa).

Residues Q85, 103–107 (GEGKT), and D493 each bind ATP. Residues C823, C825, C834, and H835 each coordinate Zn(2+).

It belongs to the SecA family. In terms of assembly, monomer and homodimer. Part of the essential Sec protein translocation apparatus which comprises SecA, SecYEG and auxiliary proteins SecDF. Other proteins may also be involved. The cofactor is Zn(2+).

The protein resides in the cell membrane. The protein localises to the cytoplasm. It catalyses the reaction ATP + H2O + cellular proteinSide 1 = ADP + phosphate + cellular proteinSide 2.. Its function is as follows. Part of the Sec protein translocase complex. Interacts with the SecYEG preprotein conducting channel. Has a central role in coupling the hydrolysis of ATP to the transfer of proteins into and across the cell membrane, serving as an ATP-driven molecular motor driving the stepwise translocation of polypeptide chains across the membrane. The chain is Protein translocase subunit SecA from Streptococcus gordonii (strain Challis / ATCC 35105 / BCRC 15272 / CH1 / DL1 / V288).